The primary structure comprises 512 residues: Pantothenate transporter FEN2 (512 aa).

Over 1–27 (MMKESKSITQHEVERESVSSKRAIKKR) the chain is Cytoplasmic. Residues 28-48 (LLLFKIDLFVLSFVCLQYWIN) form a helical membrane-spanning segment. The Extracellular portion of the chain corresponds to 49-79 (YVDRVGFTNAYISGMKEDLKMVGNDLTVSNT). Residues 80-100 (VFMIGYIVGMVPNNLMLLCVP) traverse the membrane as a helical segment. Over 101-102 (PR) the chain is Cytoplasmic. The chain crosses the membrane as a helical span at residues 103 to 123 (IWLSFCTFAWGLLTLGMYKVT). The Extracellular portion of the chain corresponds to 124–132 (SFKHICAIR). The helical transmembrane segment at 133-153 (FFQALFESCTFSGTHFVLGSW) threads the bilayer. The Cytoplasmic segment spans residues 154-164 (YKEDELPIRSA). Residues 165–185 (IFTGSGLVGSMFSGFMQTSIF) form a helical membrane-spanning segment. Topologically, residues 186–198 (THLNGRNGLAGWR) are extracellular. The helical transmembrane segment at 199–219 (WLFIIDFCITLPIAIYGFIFF) threads the bilayer. At 220–271 (PGLPDQTSAVSKFSMTRYIFNEQELHYARRRLPARDESTRLDWSTIPRVLKR) the chain is on the cytoplasmic side. Residues 272 to 292 (WHWWMFSLVWVLGGENLGFAS) form a helical membrane-spanning segment. Topologically, residues 293 to 312 (NSTFALWLQNQKYTLAQRNN) are extracellular. A helical membrane pass occupies residues 313 to 333 (YPSGIFAVGIVSTLCSAVYMS). Residues 334–342 (KIPRARHWH) lie on the Cytoplasmic side of the membrane. The chain crosses the membrane as a helical span at residues 343 to 363 (VSVFISLVMVIVAVLIRADPL). Topologically, residues 364-372 (NPKVVFSAQ) are extracellular. A helical transmembrane segment spans residues 373–393 (YLGGVAYAGQAVFFSWANIIC). The Cytoplasmic segment spans residues 394-401 (HADLQERA). Residues 402–422 (IVLASMNMFSGAVNAWWSILF) form a helical membrane-spanning segment. Residues 423–434 (FASDMVPKFERG) are Extracellular-facing. The chain crosses the membrane as a helical span at residues 435–455 (CYALLATAISSGIVSVVIRSL). Residues 456–512 (QIKENLSKKQVPYIDANDMPGEDDDDDNQDNENDGDDESMEVELHNEEMAEISNPFR) lie on the Cytoplasmic side of the membrane. The tract at residues 468-512 (YIDANDMPGEDDDDDNQDNENDGDDESMEVELHNEEMAEISNPFR) is disordered. Positions 475–496 (PGEDDDDDNQDNENDGDDESME) are enriched in acidic residues.

Belongs to the major facilitator superfamily. Allantoate permease family.

The protein localises to the cell membrane. In terms of biological role, transports pantothenate into the cell. Also involved in the catabolite repression-mediated regulation of ergosterol biosynthesis and in fenpropimorph resistance. This chain is Pantothenate transporter FEN2 (FEN2), found in Saccharomyces cerevisiae (strain ATCC 204508 / S288c) (Baker's yeast).